The chain runs to 539 residues: GMP synthase [glutamine-hydrolyzing] (539 aa).

Positions 20-215 (TILILDFGSQ…AIEICHAKPN (196 aa)) constitute a Glutamine amidotransferase type-1 domain. Residue cysteine 96 is the Nucleophile of the active site. Catalysis depends on residues histidine 189 and glutamate 191. The 198-residue stretch at 216–413 (WSMENFVDKE…LGIEHSLVWR (198 aa)) folds into the GMPS ATP-PPase domain. ATP is bound at residue 244–250 (SGGVDST). XMP-binding residues include arginine 317, aspartate 475, lysine 531, and glutamate 537.

As to quaternary structure, homodimer. Mg(2+) is required as a cofactor.

The protein resides in the cytoplasm. It is found in the cytosol. The catalysed reaction is XMP + L-glutamine + ATP + H2O = GMP + L-glutamate + AMP + diphosphate + 2 H(+). It participates in purine metabolism; GMP biosynthesis; GMP from XMP (L-Gln route): step 1/1. Functionally, catalyzes the conversion of xanthine monophosphate (XMP) to GMP in the presence of glutamine and ATP through an adenyl-XMP intermediate. This chain is GMP synthase [glutamine-hydrolyzing], found in Schizosaccharomyces pombe (strain 972 / ATCC 24843) (Fission yeast).